A 177-amino-acid chain; its full sequence is RNA pyrophosphohydrolase (177 aa).

The region spanning 6–149 (GYRPNVGIVI…KRDVYRRVMK (144 aa)) is the Nudix hydrolase domain. The Nudix box motif lies at 38-59 (GGINPGESPEQAMYRELFEEVG).

This sequence belongs to the Nudix hydrolase family. RppH subfamily. A divalent metal cation is required as a cofactor.

In terms of biological role, accelerates the degradation of transcripts by removing pyrophosphate from the 5'-end of triphosphorylated RNA, leading to a more labile monophosphorylated state that can stimulate subsequent ribonuclease cleavage. The protein is RNA pyrophosphohydrolase of Pectobacterium atrosepticum (strain SCRI 1043 / ATCC BAA-672) (Erwinia carotovora subsp. atroseptica).